Reading from the N-terminus, the 255-residue chain is Triosephosphate isomerase (255 aa).

A substrate-binding site is contributed by 9–11 (NWK). The active-site Electrophile is H100. The Proton acceptor role is filled by E169. Residues G175, S208, and 229–230 (GG) each bind substrate.

Belongs to the triosephosphate isomerase family. In terms of assembly, homodimer.

It localises to the cytoplasm. It carries out the reaction D-glyceraldehyde 3-phosphate = dihydroxyacetone phosphate. Its pathway is carbohydrate biosynthesis; gluconeogenesis. The protein operates within carbohydrate degradation; glycolysis; D-glyceraldehyde 3-phosphate from glycerone phosphate: step 1/1. Functionally, involved in the gluconeogenesis. Catalyzes stereospecifically the conversion of dihydroxyacetone phosphate (DHAP) to D-glyceraldehyde-3-phosphate (G3P). This Synechococcus sp. (strain JA-3-3Ab) (Cyanobacteria bacterium Yellowstone A-Prime) protein is Triosephosphate isomerase.